A 148-amino-acid polypeptide reads, in one-letter code: Urease accessory protein UreE (148 aa).

The protein belongs to the UreE family.

Its subcellular location is the cytoplasm. Involved in urease metallocenter assembly. Binds nickel. Probably functions as a nickel donor during metallocenter assembly. This Bacillus sp. (strain TB-90) protein is Urease accessory protein UreE.